Here is a 570-residue protein sequence, read N- to C-terminus: Dihydroxy-acid dehydratase (570 aa).

Cys61 serves as a coordination point for [2Fe-2S] cluster. Asp94 contacts Mg(2+). Cys135 is a binding site for [2Fe-2S] cluster. Asp136 and Lys137 together coordinate Mg(2+). Lys137 carries the N6-carboxylysine modification. Cys207 is a [2Fe-2S] cluster binding site. Glu459 serves as a coordination point for Mg(2+). Ser485 serves as the catalytic Proton acceptor.

It belongs to the IlvD/Edd family. In terms of assembly, homodimer. [2Fe-2S] cluster serves as cofactor. The cofactor is Mg(2+).

It catalyses the reaction (2R)-2,3-dihydroxy-3-methylbutanoate = 3-methyl-2-oxobutanoate + H2O. It carries out the reaction (2R,3R)-2,3-dihydroxy-3-methylpentanoate = (S)-3-methyl-2-oxopentanoate + H2O. It participates in amino-acid biosynthesis; L-isoleucine biosynthesis; L-isoleucine from 2-oxobutanoate: step 3/4. The protein operates within amino-acid biosynthesis; L-valine biosynthesis; L-valine from pyruvate: step 3/4. Its function is as follows. Functions in the biosynthesis of branched-chain amino acids. Catalyzes the dehydration of (2R,3R)-2,3-dihydroxy-3-methylpentanoate (2,3-dihydroxy-3-methylvalerate) into 2-oxo-3-methylpentanoate (2-oxo-3-methylvalerate) and of (2R)-2,3-dihydroxy-3-methylbutanoate (2,3-dihydroxyisovalerate) into 2-oxo-3-methylbutanoate (2-oxoisovalerate), the penultimate precursor to L-isoleucine and L-valine, respectively. This Lactococcus lactis subsp. cremoris (strain SK11) protein is Dihydroxy-acid dehydratase.